The chain runs to 295 residues: 4-diphosphocytidyl-2-C-methyl-D-erythritol kinase (295 aa).

K25 is an active-site residue. 108-118 provides a ligand contact to ATP; the sequence is PMGSGLGGGSS. D150 is an active-site residue.

The protein belongs to the GHMP kinase family. IspE subfamily.

It carries out the reaction 4-CDP-2-C-methyl-D-erythritol + ATP = 4-CDP-2-C-methyl-D-erythritol 2-phosphate + ADP + H(+). It functions in the pathway isoprenoid biosynthesis; isopentenyl diphosphate biosynthesis via DXP pathway; isopentenyl diphosphate from 1-deoxy-D-xylulose 5-phosphate: step 3/6. Catalyzes the phosphorylation of the position 2 hydroxy group of 4-diphosphocytidyl-2C-methyl-D-erythritol. The protein is 4-diphosphocytidyl-2-C-methyl-D-erythritol kinase of Pasteurella multocida (strain Pm70).